Reading from the N-terminus, the 189-residue chain is Glutathione-dependent formaldehyde-activating enzyme (189 aa).

Residues 20–167 (FAGGTLVCKC…LKELGLEPYD (148 aa)) enclose the CENP-V/GFA domain. Positions 27, 29, 48, 50, 53, 95, and 98 each coordinate Zn(2+).

Belongs to the Gfa family. Requires Zn(2+) as cofactor.

It carries out the reaction S-(hydroxymethyl)glutathione = glutathione + formaldehyde. It functions in the pathway one-carbon metabolism; formaldehyde degradation; formate from formaldehyde (glutathione route): step 1/3. Catalyzes the condensation of formaldehyde and glutathione to S-hydroxymethylglutathione. The sequence is that of Glutathione-dependent formaldehyde-activating enzyme from Rhodopseudomonas palustris (strain BisA53).